The sequence spans 155 residues: Ciliary microtubule inner protein 2C (155 aa).

This sequence belongs to the CIMIP2 family.

Its subcellular location is the cytoplasm. The protein localises to the cytoskeleton. The protein resides in the cilium axoneme. Functionally, microtubule inner protein (MIP) part of the dynein-decorated doublet microtubules (DMTs) in cilia axoneme, which is required for motile cilia beating. The chain is Ciliary microtubule inner protein 2C (cimip2cb) from Xenopus laevis (African clawed frog).